The chain runs to 43 residues: Protein PsbN (43 aa).

The chain crosses the membrane as a helical span at residues 7-27 (VAIFISCLLVSFTGYALYTAF).

Belongs to the PsbN family.

Its subcellular location is the plastid. The protein resides in the chloroplast thylakoid membrane. Functionally, may play a role in photosystem I and II biogenesis. The sequence is that of Protein PsbN from Zygnema circumcarinatum (Green alga).